The sequence spans 536 residues: MLQNMISKDDVLASAEQLKELLPYNEENVQLIKKALILYRQDSVYRLQAVSPTEVTAYVQDVVPVRVTLNLFVIVKSGCSCPSGRICRHMLAVFLYVYAMFERVGTFTEYWLEREKLEESKELVRRQFQEKVLPNEESLSSWLAFFDSEFSLWQARTPEGSQNMQGLYYGYLSALKKHAPNKPELKSLYQIHSAIAVWLRMFTLIEAGKLNPEQDFYSLNPYVEQLMDTIYSSIDKLKTYALSFALDPFLDKTPDVIRHLLLKEEIFQYERIRVFGEIWSALLSRPKWVAREQEILKKEAGRRFSPELQFGRLHLEFLQKNDDVIFEEADQFPPEALPYTFQWLSEMTAKKDWKRLKTWYQQIEPIAMGYTKLDKPFKEIRDVIGELFLLLNAYVQQTNDQALFERFAAGCLPYTFTEYSHHLYEKKRYAEWIEIHSLVGFSINEMDKMMLKEIAASDPEALIPAYHREVAFFIDQKNRSSYKEAARYLKKLRTLYKKAKKQKVWERYIQLLSSHYKRLRALQEELQKGKLIDGES.

The SWIM-type zinc finger occupies 71-98 (LFVIVKSGCSCPSGRICRHMLAVFLYVY). Positions 482-528 (YKEAARYLKKLRTLYKKAKKQKVWERYIQLLSSHYKRLRALQEELQK) form a coiled coil.

This is an uncharacterized protein from Bacillus subtilis (strain 168).